We begin with the raw amino-acid sequence, 244 residues long: Protein crossbronx (244 aa).

The UBC core domain maps to 20–176; that stretch reads QQEYKILAEY…VLENIKESKE (157 aa).

It belongs to the ubiquitin-conjugating enzyme family. FTS subfamily.

This Drosophila persimilis (Fruit fly) protein is Protein crossbronx (cbx).